A 301-amino-acid polypeptide reads, in one-letter code: Ribosomal protein L11 methyltransferase (301 aa).

S-adenosyl-L-methionine-binding residues include T146, G167, D189, and N237.

Belongs to the methyltransferase superfamily. PrmA family.

It is found in the cytoplasm. It catalyses the reaction L-lysyl-[protein] + 3 S-adenosyl-L-methionine = N(6),N(6),N(6)-trimethyl-L-lysyl-[protein] + 3 S-adenosyl-L-homocysteine + 3 H(+). Its function is as follows. Methylates ribosomal protein L11. This Prochlorococcus marinus (strain MIT 9313) protein is Ribosomal protein L11 methyltransferase.